The primary structure comprises 498 residues: ATP synthase subunit beta, chloroplastic (498 aa).

Threonine 6 carries the phosphothreonine modification. Residue serine 13 is modified to Phosphoserine. 172 to 179 contributes to the ATP binding site; it reads GGAGVGKT.

The protein belongs to the ATPase alpha/beta chains family. F-type ATPases have 2 components, CF(1) - the catalytic core - and CF(0) - the membrane proton channel. CF(1) has five subunits: alpha(3), beta(3), gamma(1), delta(1), epsilon(1). CF(0) has four main subunits: a(1), b(1), b'(1) and c(9-12).

The protein localises to the plastid. It localises to the chloroplast thylakoid membrane. The catalysed reaction is ATP + H2O + 4 H(+)(in) = ADP + phosphate + 5 H(+)(out). Produces ATP from ADP in the presence of a proton gradient across the membrane. The catalytic sites are hosted primarily by the beta subunits. The polypeptide is ATP synthase subunit beta, chloroplastic (Brassica napus (Rape)).